The sequence spans 29 residues: Kunitz-type trypsin inhibitor IVTI (29 aa).

Belongs to the protease inhibitor I3 (leguminous Kunitz-type inhibitor) family. In terms of assembly, monomer and dimer.

Inhibits bovine trypsin but not chymotrypsin. Also inhibits trypsin-like enzymes from midgut of several lepidopteran species and inhibits larval development in those species. Has fungicidal activity against yeast C.buinensis. Has a bacteriostatic effect against E.coli. Is not cytotoxic. The sequence is that of Kunitz-type trypsin inhibitor IVTI from Inga vera (River koko).